Consider the following 471-residue polypeptide: Light-independent protochlorophyllide reductase subunit N (471 aa).

[4Fe-4S] cluster is bound by residues C22, C47, and C107.

It belongs to the BchN/ChlN family. In terms of assembly, protochlorophyllide reductase is composed of three subunits; ChlL, ChlN and ChlB. Forms a heterotetramer of two ChlB and two ChlN subunits. Requires [4Fe-4S] cluster as cofactor.

The protein localises to the plastid. Its subcellular location is the chloroplast. The enzyme catalyses chlorophyllide a + oxidized 2[4Fe-4S]-[ferredoxin] + 2 ADP + 2 phosphate = protochlorophyllide a + reduced 2[4Fe-4S]-[ferredoxin] + 2 ATP + 2 H2O. Its pathway is porphyrin-containing compound metabolism; chlorophyll biosynthesis (light-independent). Its function is as follows. Component of the dark-operative protochlorophyllide reductase (DPOR) that uses Mg-ATP and reduced ferredoxin to reduce ring D of protochlorophyllide (Pchlide) to form chlorophyllide a (Chlide). This reaction is light-independent. The NB-protein (ChlN-ChlB) is the catalytic component of the complex. This is Light-independent protochlorophyllide reductase subunit N from Anthoceros angustus (Hornwort).